Here is a 296-residue protein sequence, read N- to C-terminus: uncharacterized protein (296 aa).

The next 2 membrane-spanning stretches (helical) occupy residues 82–102 (VVAP…WSVQ) and 117–137 (ISVL…SAIF).

It is found in the cell membrane. This is an uncharacterized protein from Sinorhizobium fredii (strain NBRC 101917 / NGR234).